The following is a 252-amino-acid chain: Acyltransferase PGAP2 (252 aa).

Topologically, residues 1 to 22 (MVPVGPERGANSLFSLRFTTFA) are cytoplasmic. The chain crosses the membrane as a helical span at residues 23–43 (VGTVSLPLFAFLFCIVWSLLF). Topologically, residues 44–77 (NFSETTATHCHVPNYLPSVSAAIGGETPQRYIWR) are lumenal. A helical transmembrane segment spans residues 78 to 98 (LCIGLHSAPRFLVGVAYLHYY). Residues 99-111 (QGTPCSSPAYPRL) lie on the Cytoplasmic side of the membrane. Residues 112 to 132 (CHLNFLLNCCEIFFLILLTYV) form a helical membrane-spanning segment. Residues 133-142 (SSSENYEVHK) are Lumenal-facing. The chain crosses the membrane as a helical span at residues 143-163 (LGFMAFMLFSVGYMFVTCSLW). Residues 164 to 184 (RVARKGSGSLEERTSYAWKKR) are Cytoplasmic-facing. The helical transmembrane segment at 185-205 (LFGFYLLMFLSSILVYIWHNM) threads the bilayer. Topologically, residues 206-208 (YCE) are lumenal. The helical transmembrane segment at 209 to 229 (AGVYTVFALLEYLVVLSNMGF) threads the bilayer. Residues 230 to 252 (HMTAWWDFGNKELMICSPGDKRI) are Cytoplasmic-facing.

The protein belongs to the PGAP2 family.

The protein resides in the golgi apparatus membrane. In terms of biological role, involved in the fatty acid remodeling steps of GPI-anchor maturation where the unsaturated acyl chain at sn-2 of inositol phosphate is replaced by a saturated stearoyl chain. May catalyze the second step of the fatty acid remodeling, by reacylating a lyso-GPI intermediate at sn-2 of inositol phosphate by a saturated chain. The fatty acid remodeling steps is critical for the integration of GPI-APs into lipid rafts. The polypeptide is Acyltransferase PGAP2 (Xenopus tropicalis (Western clawed frog)).